We begin with the raw amino-acid sequence, 406 residues long: S-adenosylmethionine synthase (406 aa).

Position 141-146 (141-146 (GQGSMD)) interacts with ATP.

The protein belongs to the AdoMet synthase 2 family. As to quaternary structure, homodimer. Requires Mg(2+) as cofactor.

The catalysed reaction is L-methionine + ATP + H2O = S-adenosyl-L-methionine + phosphate + diphosphate. It functions in the pathway amino-acid biosynthesis; S-adenosyl-L-methionine biosynthesis; S-adenosyl-L-methionine from L-methionine: step 1/1. Its function is as follows. Catalyzes the formation of S-adenosylmethionine from methionine and ATP. The chain is S-adenosylmethionine synthase (mat) from Methanocaldococcus jannaschii (strain ATCC 43067 / DSM 2661 / JAL-1 / JCM 10045 / NBRC 100440) (Methanococcus jannaschii).